A 390-amino-acid chain; its full sequence is S-adenosylmethionine synthase (390 aa).

His-15 is an ATP binding site. Asp-17 lines the Mg(2+) pocket. Glu-43 serves as a coordination point for K(+). L-methionine-binding residues include Glu-56 and Gln-99. The interval 99–109 (QSPDINQGVDR) is flexible loop. Residues 164-166 (DAK), 230-231 (RF), Asp-239, 245-246 (RK), Ala-262, and Lys-266 contribute to the ATP site. Asp-239 is an L-methionine binding site. Lys-270 provides a ligand contact to L-methionine.

Belongs to the AdoMet synthase family. In terms of assembly, homotetramer; dimer of dimers. Requires Mg(2+) as cofactor. The cofactor is K(+).

It is found in the cytoplasm. It carries out the reaction L-methionine + ATP + H2O = S-adenosyl-L-methionine + phosphate + diphosphate. It functions in the pathway amino-acid biosynthesis; S-adenosyl-L-methionine biosynthesis; S-adenosyl-L-methionine from L-methionine: step 1/1. Its function is as follows. Catalyzes the formation of S-adenosylmethionine (AdoMet) from methionine and ATP. The overall synthetic reaction is composed of two sequential steps, AdoMet formation and the subsequent tripolyphosphate hydrolysis which occurs prior to release of AdoMet from the enzyme. This Photorhabdus laumondii subsp. laumondii (strain DSM 15139 / CIP 105565 / TT01) (Photorhabdus luminescens subsp. laumondii) protein is S-adenosylmethionine synthase.